Here is a 122-residue protein sequence, read N- to C-terminus: Large ribosomal subunit protein bL12 (122 aa).

It belongs to the bacterial ribosomal protein bL12 family. Homodimer. Part of the ribosomal stalk of the 50S ribosomal subunit. Forms a multimeric L10(L12)X complex, where L10 forms an elongated spine to which 2 to 4 L12 dimers bind in a sequential fashion. Binds GTP-bound translation factors.

In terms of biological role, forms part of the ribosomal stalk which helps the ribosome interact with GTP-bound translation factors. Is thus essential for accurate translation. The sequence is that of Large ribosomal subunit protein bL12 from Aliivibrio fischeri (strain ATCC 700601 / ES114) (Vibrio fischeri).